The chain runs to 200 residues: Peptidyl-tRNA hydrolase (200 aa).

Position 16 (tyrosine 16) interacts with tRNA. Histidine 21 acts as the Proton acceptor in catalysis. The tRNA site is built by phenylalanine 67, asparagine 69, and asparagine 115.

It belongs to the PTH family. Monomer.

Its subcellular location is the cytoplasm. It catalyses the reaction an N-acyl-L-alpha-aminoacyl-tRNA + H2O = an N-acyl-L-amino acid + a tRNA + H(+). Functionally, hydrolyzes ribosome-free peptidyl-tRNAs (with 1 or more amino acids incorporated), which drop off the ribosome during protein synthesis, or as a result of ribosome stalling. Catalyzes the release of premature peptidyl moieties from peptidyl-tRNA molecules trapped in stalled 50S ribosomal subunits, and thus maintains levels of free tRNAs and 50S ribosomes. The chain is Peptidyl-tRNA hydrolase from Prochlorococcus marinus (strain AS9601).